Reading from the N-terminus, the 415-residue chain is Phosphoribosylamine--glycine ligase (415 aa).

Residues 108 to 311 (KKIMEKYNIP…LMQHIIDLDE (204 aa)) enclose the ATP-grasp domain. 134 to 191 (IENCELPVVVKKDGLAAGKGVIIADTIEAARSAIEIMYGDEEEGTVVFETFLEGEEFS) lines the ATP pocket. Mg(2+)-binding residues include glutamate 281 and asparagine 283.

The protein belongs to the GARS family. It depends on Mg(2+) as a cofactor. Mn(2+) serves as cofactor.

It catalyses the reaction 5-phospho-beta-D-ribosylamine + glycine + ATP = N(1)-(5-phospho-beta-D-ribosyl)glycinamide + ADP + phosphate + H(+). Its pathway is purine metabolism; IMP biosynthesis via de novo pathway; N(1)-(5-phospho-D-ribosyl)glycinamide from 5-phospho-alpha-D-ribose 1-diphosphate: step 2/2. This Staphylococcus aureus (strain COL) protein is Phosphoribosylamine--glycine ligase.